The primary structure comprises 396 residues: Tryptophan synthase beta chain (396 aa).

Lysine 86 carries the N6-(pyridoxal phosphate)lysine modification.

Belongs to the TrpB family. As to quaternary structure, tetramer of two alpha and two beta chains. The cofactor is pyridoxal 5'-phosphate.

It carries out the reaction (1S,2R)-1-C-(indol-3-yl)glycerol 3-phosphate + L-serine = D-glyceraldehyde 3-phosphate + L-tryptophan + H2O. The protein operates within amino-acid biosynthesis; L-tryptophan biosynthesis; L-tryptophan from chorismate: step 5/5. Its function is as follows. The beta subunit is responsible for the synthesis of L-tryptophan from indole and L-serine. This Yersinia enterocolitica serotype O:8 / biotype 1B (strain NCTC 13174 / 8081) protein is Tryptophan synthase beta chain.